The following is a 127-amino-acid chain: Putative defensin-like protein 180 (127 aa).

The N-terminal stretch at 1–26 (MERITSLVFFASFLIIFVSGVNQTRA) is a signal peptide. Intrachain disulfides connect C29/C70, C36/C55, C39/C64, C43/C66, C81/C127, C92/C112, C97/C121, and C101/C123.

This sequence belongs to the DEFL family.

It localises to the secreted. The chain is Putative defensin-like protein 180 (LCR58) from Arabidopsis thaliana (Mouse-ear cress).